Consider the following 630-residue polypeptide: Coiled-coil domain-containing protein 120 (630 aa).

An involved in CYTH2-binding region spans residues 31–70 (RLRGLLDRQRTLQEALSLKLQELRKVCLQEAELTGQLPPE). Residues 109–173 (ELALEALERE…LRDVRARLGL (65 aa)) are a coiled coil. 2 stretches are compositionally biased toward low complexity: residues 212-222 (HSESSSLSESG) and 282-297 (ASPT…SASS). Disordered stretches follow at residues 212–435 (HSES…GAPR) and 457–534 (GGGT…NPLL). A compositionally biased stretch (polar residues) spans 326–335 (RQWSGSQDSQ). Ser-358 and Ser-360 each carry phosphoserine. Over residues 421-434 (ARPSSAAPASRGAP) the composition is skewed to low complexity. Arg-435 is modified (omega-N-methylarginine).

As to quaternary structure, interacts with NIN and CEP170; leading to recruit them to centrosomes. Directly interacts with CYTH2; this interaction stabilizes CCDC120, possibly by preventing ubiquitination. Ubiquitinated; interaction with CYTH2 may prevent ubiquitination.

The protein localises to the cytoplasm. It localises to the cytoskeleton. Its subcellular location is the microtubule organizing center. The protein resides in the centrosome. It is found in the centriole. The protein localises to the cell projection. It localises to the neuron projection. Its subcellular location is the growth cone. The protein resides in the endosome. In terms of biological role, centriolar protein required for centriole subdistal appendage assembly and microtubule anchoring in interphase cells. Together with CCDC68, cooperate with subdistal appendage components ODF2, NIN and CEP170 for hierarchical subdistal appendage assembly. Recruits NIN and CEP170 to centrosomes. Also required for neurite growth. Localizes CYTH2 to vesicles to allow its transport along neurites, and subsequent ARF6 activation and neurite growth. The protein is Coiled-coil domain-containing protein 120 (CCDC120) of Homo sapiens (Human).